Consider the following 250-residue polypeptide: tRNA-splicing endonuclease subunit Sen2-2 (250 aa).

Active-site residues include Y148, H156, and K189. The tract at residues 225–250 (SPELSREDQSTNSKQHVPNVSNLNTL) is disordered. Positions 234-250 (STNSKQHVPNVSNLNTL) are enriched in polar residues.

Belongs to the tRNA-intron endonuclease family. As to quaternary structure, tRNA splicing endonuclease is a heterotetramer composed of SEN2, SEN15, SEN34/LENG5 and SEN54.

It is found in the nucleus. It catalyses the reaction pretRNA = a 3'-half-tRNA molecule with a 5'-OH end + a 5'-half-tRNA molecule with a 2',3'-cyclic phosphate end + an intron with a 2',3'-cyclic phosphate and a 5'-hydroxyl terminus.. Constitutes one of the two catalytic subunit of the tRNA-splicing endonuclease complex, a complex responsible for identification and cleavage of the splice sites in pre-tRNA. It cleaves pre-tRNA at the 5'- and 3'-splice sites to release the intron. The products are an intron and two tRNA half-molecules bearing 2',3'-cyclic phosphate and 5'-OH termini. There are no conserved sequences at the splice sites, but the intron is invariably located at the same site in the gene, placing the splice sites an invariant distance from the constant structural features of the tRNA body. Probably carries the active site for 5'-splice site cleavage. This Arabidopsis thaliana (Mouse-ear cress) protein is tRNA-splicing endonuclease subunit Sen2-2 (SEN2).